Reading from the N-terminus, the 31-residue chain is Cyclotide psybry A (31 aa).

The segment at residues 1–31 (GFNPCGETCIWFPTCHAPGCTCSIANICVRN) is a cross-link (cyclopeptide (Gly-Asn)). Disulfide bonds link Cys5-Cys20, Cys9-Cys22, and Cys15-Cys28.

This is a cyclic peptide.

In terms of biological role, probably participates in a plant defense mechanism. This is Cyclotide psybry A from Psychotria brachyceras.